A 457-amino-acid polypeptide reads, in one-letter code: Argininosuccinate lyase (457 aa).

Belongs to the lyase 1 family. Argininosuccinate lyase subfamily.

It is found in the cytoplasm. It catalyses the reaction 2-(N(omega)-L-arginino)succinate = fumarate + L-arginine. It participates in amino-acid biosynthesis; L-arginine biosynthesis; L-arginine from L-ornithine and carbamoyl phosphate: step 3/3. This is Argininosuccinate lyase from Escherichia coli O157:H7 (strain EC4115 / EHEC).